The following is a 343-amino-acid chain: MESTPKKAPRSKFPALLVVALALVALVFVIWRVDSAPSTNDAYASADTIDVVPEVSGRIVELAVTDNQAVKQGDLLFRIDPRPYEANLAKAEASLAALDKQIMLTQRSVDAQQFGADSVNATVEKARAAAKQATDTLRRTEPLLKEGFVSAEDVDRARTAQRAAEADLNAVLLQAQSAASAVSGVDALVAQRAAVEADIALTKLHLEMATVRAPFDGRVISLKTSVGQFASAMRPIFTLIDTRHWYVIANFRETDLKNIRSGTPATIRLMSDSGKTFEGKVDSIGYGVLPDDGGLVLGGLPKVSRSINWVRVAQRFPVKIMVDKPDPEMFRIGASAVANLEPQ.

Residues 1-12 are Cytoplasmic-facing; it reads MESTPKKAPRSK. Residues 13–33 traverse the membrane as a helical; Signal-anchor for type II membrane protein segment; that stretch reads FPALLVVALALVALVFVIWRV. At 34–343 the chain is on the periplasmic side; it reads DSAPSTNDAY…ASAVANLEPQ (310 aa).

This sequence belongs to the membrane fusion protein (MFP) (TC 8.A.1) family. Could be part of a tripartite efflux system composed of MdtN, MdtO and MdtP.

It localises to the cell inner membrane. Could be involved in resistance to puromycin, acriflavine and tetraphenylarsonium chloride. This is Multidrug resistance protein MdtN (mdtN) from Escherichia coli (strain K12).